The following is a 113-amino-acid chain: Small ribosomal subunit protein bS6 (113 aa).

It belongs to the bacterial ribosomal protein bS6 family.

Its function is as follows. Binds together with bS18 to 16S ribosomal RNA. The protein is Small ribosomal subunit protein bS6 of Ruthia magnifica subsp. Calyptogena magnifica.